Reading from the N-terminus, the 339-residue chain is Sulfate/thiosulfate import ATP-binding protein CysA (339 aa).

An ABC transporter domain is found at 3–237; it reads IAIRSVEKQF…PETAFVCGFV (235 aa). An ATP-binding site is contributed by 35–42; that stretch reads GPSGSGKT.

Belongs to the ABC transporter superfamily. Sulfate/tungstate importer (TC 3.A.1.6) family. In terms of assembly, the complex is composed of two ATP-binding proteins (CysA), two transmembrane proteins (CysT and CysW) and a solute-binding protein (CysP).

The protein localises to the cell inner membrane. The enzyme catalyses sulfate(out) + ATP + H2O = sulfate(in) + ADP + phosphate + H(+). It carries out the reaction thiosulfate(out) + ATP + H2O = thiosulfate(in) + ADP + phosphate + H(+). Part of the ABC transporter complex CysAWTP involved in sulfate/thiosulfate import. Responsible for energy coupling to the transport system. This is Sulfate/thiosulfate import ATP-binding protein CysA from Caulobacter vibrioides (strain ATCC 19089 / CIP 103742 / CB 15) (Caulobacter crescentus).